Reading from the N-terminus, the 884-residue chain is Translation initiation factor IF-2 (884 aa).

Positions 58-248 are disordered; it reads PEKVEQKRVR…GKTESVETEE (191 aa). The span at 66–77 shows a compositional bias: basic residues; it reads VRSNVIRKRRQP. The span at 87 to 106 shows a compositional bias: low complexity; that stretch reads EAPAAQAPEAEEVTAPTAEE. Basic residues predominate over residues 172 to 183; the sequence is SRKKAKAKKHQA. Low complexity predominate over residues 207–223; the sequence is DTAPADSPAAPAAATPA. The span at 229 to 239 shows a compositional bias: basic residues; that stretch reads KPSRKDRKKRG. Residues 384–553 form the tr-type G domain; that stretch reads KRAPVVTIMG…LLQAEMLELK (170 aa). A G1 region spans residues 393–400; that stretch reads GHVDHGKT. 393–400 serves as a coordination point for GTP; the sequence is GHVDHGKT. The tract at residues 418 to 422 is G2; that stretch reads GITQH. The tract at residues 439–442 is G3; it reads DTPG. GTP is bound by residues 439–443 and 493–496; these read DTPGH and NKID. Residues 493–496 form a G4 region; that stretch reads NKID. The interval 529–531 is G5; the sequence is SAK.

This sequence belongs to the TRAFAC class translation factor GTPase superfamily. Classic translation factor GTPase family. IF-2 subfamily.

It localises to the cytoplasm. One of the essential components for the initiation of protein synthesis. Protects formylmethionyl-tRNA from spontaneous hydrolysis and promotes its binding to the 30S ribosomal subunits. Also involved in the hydrolysis of GTP during the formation of the 70S ribosomal complex. This Desulfosudis oleivorans (strain DSM 6200 / JCM 39069 / Hxd3) (Desulfococcus oleovorans) protein is Translation initiation factor IF-2.